The following is a 1178-amino-acid chain: DNA-directed RNA polymerase subunit beta' (1178 aa).

Zn(2+)-binding residues include Cys60, Cys62, Cys75, and Cys78. Mg(2+)-binding residues include Asp450, Asp452, and Asp454. Residues Cys795, Cys869, Cys876, and Cys879 each coordinate Zn(2+).

Belongs to the RNA polymerase beta' chain family. The RNAP catalytic core consists of 2 alpha, 1 beta, 1 beta' and 1 omega subunit. When a sigma factor is associated with the core the holoenzyme is formed, which can initiate transcription. The cofactor is Mg(2+). Requires Zn(2+) as cofactor.

The enzyme catalyses RNA(n) + a ribonucleoside 5'-triphosphate = RNA(n+1) + diphosphate. Functionally, DNA-dependent RNA polymerase catalyzes the transcription of DNA into RNA using the four ribonucleoside triphosphates as substrates. This chain is DNA-directed RNA polymerase subunit beta', found in Clostridium botulinum (strain Okra / Type B1).